The primary structure comprises 399 residues: Chorismate synthase (399 aa).

The NADP(+) site is built by Arg40 and Arg46. FMN is bound by residues 135 to 137 (RAS), 256 to 257 (QA), Gly301, 316 to 320 (KPIAT), and Arg342.

It belongs to the chorismate synthase family. In terms of assembly, homotetramer. Requires FMNH2 as cofactor.

The catalysed reaction is 5-O-(1-carboxyvinyl)-3-phosphoshikimate = chorismate + phosphate. Its pathway is metabolic intermediate biosynthesis; chorismate biosynthesis; chorismate from D-erythrose 4-phosphate and phosphoenolpyruvate: step 7/7. In terms of biological role, catalyzes the anti-1,4-elimination of the C-3 phosphate and the C-6 proR hydrogen from 5-enolpyruvylshikimate-3-phosphate (EPSP) to yield chorismate, which is the branch point compound that serves as the starting substrate for the three terminal pathways of aromatic amino acid biosynthesis. This reaction introduces a second double bond into the aromatic ring system. The polypeptide is Chorismate synthase (Paenarthrobacter aurescens (strain TC1)).